Consider the following 567-residue polypeptide: Phosphoglucomutase-like protein 5 (567 aa).

A disordered region spans residues 1-26 (MEGSPIPVLTVPTAPYEDQRPTGGGG). Position 120 is a phosphothreonine (Thr-120). Ser-122 carries the post-translational modification Phosphoserine.

The protein belongs to the phosphohexose mutase family. In terms of assembly, interacts with DMD/dystrophin; the interaction is direct. Interacts with UTRN/utrophin.

Its subcellular location is the cell junction. It localises to the adherens junction. The protein resides in the cytoplasm. It is found in the cytoskeleton. The protein localises to the cell membrane. Its subcellular location is the sarcolemma. Functionally, component of adherens-type cell-cell and cell-matrix junctions. Has no phosphoglucomutase activity in vitro. This chain is Phosphoglucomutase-like protein 5, found in Mus musculus (Mouse).